The primary structure comprises 168 residues: Endoribonuclease YbeY (168 aa).

Residues H126, H130, and H136 each coordinate Zn(2+).

The protein belongs to the endoribonuclease YbeY family. Zn(2+) serves as cofactor.

It is found in the cytoplasm. Single strand-specific metallo-endoribonuclease involved in late-stage 70S ribosome quality control and in maturation of the 3' terminus of the 16S rRNA. The sequence is that of Endoribonuclease YbeY from Rhizobium meliloti (strain 1021) (Ensifer meliloti).